Consider the following 93-residue polypeptide: Putative regulatory protein Cthe_1316 (93 aa).

The disordered stretch occupies residues 74–93; the sequence is RLNTKEAEDVEVDDEEEIDE. Residues 81–93 show a composition bias toward acidic residues; it reads EDVEVDDEEEIDE.

The protein belongs to the RemA family.

This is Putative regulatory protein Cthe_1316 from Acetivibrio thermocellus (strain ATCC 27405 / DSM 1237 / JCM 9322 / NBRC 103400 / NCIMB 10682 / NRRL B-4536 / VPI 7372) (Clostridium thermocellum).